Consider the following 244-residue polypeptide: 5-oxoprolinase subunit A (244 aa).

Belongs to the LamB/PxpA family. In terms of assembly, forms a complex composed of PxpA, PxpB and PxpC.

The catalysed reaction is 5-oxo-L-proline + ATP + 2 H2O = L-glutamate + ADP + phosphate + H(+). Its function is as follows. Catalyzes the cleavage of 5-oxoproline to form L-glutamate coupled to the hydrolysis of ATP to ADP and inorganic phosphate. The polypeptide is 5-oxoprolinase subunit A (Shigella dysenteriae serotype 1 (strain Sd197)).